The following is a 589-amino-acid chain: Oligo-1,6-glucosidase IMA3 (589 aa).

Asp215 (nucleophile) is an active-site residue. The active-site Proton donor is the Glu277.

It belongs to the glycosyl hydrolase 13 family.

The protein resides in the cytoplasm. The enzyme catalyses Hydrolysis of (1-&gt;6)-alpha-D-glucosidic linkages in some oligosaccharides produced from starch and glycogen by alpha-amylase, and in isomaltose.. Its function is as follows. Alpha-glucosidase with broad substrate specificity for alpha-1,4- and alpha-1,6-glucosides. Not required for isomaltose utilization, but overexpression allows the IMA1 null mutant to grow on isomaltose. The sequence is that of Oligo-1,6-glucosidase IMA3 (IMA3) from Saccharomyces cerevisiae (strain ATCC 204508 / S288c) (Baker's yeast).